Here is a 422-residue protein sequence, read N- to C-terminus: UDP-N-acetylglucosamine 1-carboxyvinyltransferase (422 aa).

22-23 is a phosphoenolpyruvate binding site; sequence KN. A UDP-N-acetyl-alpha-D-glucosamine-binding site is contributed by Arg92. Cys116 acts as the Proton donor in catalysis. Position 116 is a 2-(S-cysteinyl)pyruvic acid O-phosphothioketal (Cys116). UDP-N-acetyl-alpha-D-glucosamine is bound by residues 121–125, Asp307, and Leu329; that span reads RPVDL.

Belongs to the EPSP synthase family. MurA subfamily.

It localises to the cytoplasm. It catalyses the reaction phosphoenolpyruvate + UDP-N-acetyl-alpha-D-glucosamine = UDP-N-acetyl-3-O-(1-carboxyvinyl)-alpha-D-glucosamine + phosphate. Its pathway is cell wall biogenesis; peptidoglycan biosynthesis. Its function is as follows. Cell wall formation. Adds enolpyruvyl to UDP-N-acetylglucosamine. In Aliarcobacter butzleri (strain RM4018) (Arcobacter butzleri), this protein is UDP-N-acetylglucosamine 1-carboxyvinyltransferase.